The primary structure comprises 362 residues: Chorismate synthase (362 aa).

NADP(+) is bound by residues R48 and R54. FMN-binding positions include 125-127, 238-239, G278, 293-297, and R319; these read RSS, NA, and KPTSS.

It belongs to the chorismate synthase family. Homotetramer. Requires FMNH2 as cofactor.

It carries out the reaction 5-O-(1-carboxyvinyl)-3-phosphoshikimate = chorismate + phosphate. Its pathway is metabolic intermediate biosynthesis; chorismate biosynthesis; chorismate from D-erythrose 4-phosphate and phosphoenolpyruvate: step 7/7. Functionally, catalyzes the anti-1,4-elimination of the C-3 phosphate and the C-6 proR hydrogen from 5-enolpyruvylshikimate-3-phosphate (EPSP) to yield chorismate, which is the branch point compound that serves as the starting substrate for the three terminal pathways of aromatic amino acid biosynthesis. This reaction introduces a second double bond into the aromatic ring system. The protein is Chorismate synthase of Tolumonas auensis (strain DSM 9187 / NBRC 110442 / TA 4).